A 216-amino-acid chain; its full sequence is Adenylate kinase (216 aa).

10-15 (GSGKGT) lines the ATP pocket. The tract at residues 30–59 (STGEILRKEIKKNKKTKKYIKKTINKGKLI) is NMP. AMP-binding positions include Thr31, Arg36, 57-59 (KLI), 85-88 (GFPR), and Gln92. Residues 121–158 (GRLIHASSGRTYHKIFNPPKIKNKDDITQEKLCSRNDD) are LID. ATP-binding positions include Arg122 and 131–132 (TY). Positions 155 and 166 each coordinate AMP. Gln196 is an ATP binding site.

This sequence belongs to the adenylate kinase family. As to quaternary structure, monomer.

The protein localises to the cytoplasm. The enzyme catalyses AMP + ATP = 2 ADP. It participates in purine metabolism; AMP biosynthesis via salvage pathway; AMP from ADP: step 1/1. Functionally, catalyzes the reversible transfer of the terminal phosphate group between ATP and AMP. Plays an important role in cellular energy homeostasis and in adenine nucleotide metabolism. The polypeptide is Adenylate kinase (Buchnera aphidicola subsp. Cinara cedri (strain Cc)).